The primary structure comprises 165 residues: 3-isopropylmalate dehydratase small subunit 2 (165 aa).

This sequence belongs to the LeuD family. LeuD type 2 subfamily. In terms of assembly, heterodimer of LeuC and LeuD.

The enzyme catalyses (2R,3S)-3-isopropylmalate = (2S)-2-isopropylmalate. It participates in amino-acid biosynthesis; L-leucine biosynthesis; L-leucine from 3-methyl-2-oxobutanoate: step 2/4. Catalyzes the isomerization between 2-isopropylmalate and 3-isopropylmalate, via the formation of 2-isopropylmaleate. This is 3-isopropylmalate dehydratase small subunit 2 (leuD2) from Archaeoglobus fulgidus (strain ATCC 49558 / DSM 4304 / JCM 9628 / NBRC 100126 / VC-16).